The chain runs to 141 residues: uncharacterized protein (141 aa).

2 helical membrane-spanning segments follow: residues 64–84 and 112–132; these read IAAV…IEAI and IVGS…LVLI.

Its subcellular location is the cell membrane. This is an uncharacterized protein from Sinorhizobium fredii (strain NBRC 101917 / NGR234).